The primary structure comprises 167 residues: Translationally-controlled tumor protein homolog (167 aa).

The TCTP domain maps to 1-167 (MLIFEDVISG…WKHGVKENKI (167 aa)).

Belongs to the TCTP family.

The protein resides in the cytoplasm. It localises to the cytoskeleton. Its function is as follows. Involved in protein synthesis. Involved in microtubule stabilization. The chain is Translationally-controlled tumor protein homolog (TMA19) from Candida albicans (strain SC5314 / ATCC MYA-2876) (Yeast).